Here is a 64-residue protein sequence, read N- to C-terminus: Small ribosomal subunit protein eS17 (64 aa).

The protein belongs to the eukaryotic ribosomal protein eS17 family.

The sequence is that of Small ribosomal subunit protein eS17 from Methanosarcina barkeri (strain Fusaro / DSM 804).